The primary structure comprises 101 residues: CRISPR-associated endoribonuclease Cas2 (101 aa).

A Mg(2+)-binding site is contributed by aspartate 17.

Belongs to the CRISPR-associated endoribonuclease Cas2 protein family. Homodimer, forms a heterotetramer with a Cas1 homodimer. Requires Mg(2+) as cofactor.

In terms of biological role, CRISPR (clustered regularly interspaced short palindromic repeat), is an adaptive immune system that provides protection against mobile genetic elements (viruses, transposable elements and conjugative plasmids). CRISPR clusters contain sequences complementary to antecedent mobile elements and target invading nucleic acids. CRISPR clusters are transcribed and processed into CRISPR RNA (crRNA). Functions as a ssRNA-specific endoribonuclease. Involved in the integration of spacer DNA into the CRISPR cassette. In Methanopyrus kandleri (strain AV19 / DSM 6324 / JCM 9639 / NBRC 100938), this protein is CRISPR-associated endoribonuclease Cas2.